The chain runs to 70 residues: Brevinin-1MT2 (70 aa).

The signal sequence occupies residues 1 to 22; it reads MFTLKKSMLLLFFLGTINLSLC. Positions 23–44 are excised as a propeptide; it reads EQERNADEEERRDDDEMDVEVE. A disulfide bridge links C64 with C70.

Belongs to the frog skin active peptide (FSAP) family. Brevinin subfamily. Expressed by the skin glands.

The protein resides in the secreted. Antimicrobial peptide with activity against a variety of Gram-negative and Gram-positive bacteria and against fungi. Shows strong hemolytic activity against human erythrocytes. This chain is Brevinin-1MT2, found in Amolops mantzorum (Sichuan torrent frog).